The primary structure comprises 396 residues: Probable sugar efflux transporter (396 aa).

The next 12 membrane-spanning stretches (helical) occupy residues 15–35 (VVTL…PVGL), 50–70 (VGIM…PFML), 81–101 (LICL…AWNF), 103–123 (VLVI…SITA), 136–156 (AQAL…GLPI), 169–189 (TFFA…KLLP), 209–229 (PALM…YTAY), 246–266 (FATV…LVFG), 275–295 (SLVS…LPAA), 301–321 (LAIL…GMQV), 333–353 (VAMA…ALVG), and 364–384 (AIGY…VLIF).

Belongs to the major facilitator superfamily. SotB (TC 2.A.1.2) family.

Its subcellular location is the cell inner membrane. In terms of biological role, involved in the efflux of sugars. The physiological role may be the reduction of the intracellular concentration of toxic sugars or sugar metabolites. In Salmonella schwarzengrund (strain CVM19633), this protein is Probable sugar efflux transporter.